A 282-amino-acid polypeptide reads, in one-letter code: Probable endonuclease 4 (282 aa).

Zn(2+) is bound by residues His69, His109, Glu144, Asp178, His181, His215, Asp228, His230, and Glu260.

Belongs to the AP endonuclease 2 family. Requires Zn(2+) as cofactor.

It catalyses the reaction Endonucleolytic cleavage to 5'-phosphooligonucleotide end-products.. Endonuclease IV plays a role in DNA repair. It cleaves phosphodiester bonds at apurinic or apyrimidinic (AP) sites, generating a 3'-hydroxyl group and a 5'-terminal sugar phosphate. This Thermosipho africanus (strain TCF52B) protein is Probable endonuclease 4.